A 1787-amino-acid polypeptide reads, in one-letter code: MRNSFPPSDGGRSTTDRRQQSFPSSSTNRYNSRSAQSSPPLNHCTTWNQQHSQYHNTNFPPNYRRDRAPSSGFSPPVTRARPNFIVQLLHPAAANSDTKLSKKQEIESIALLCEIPEESVHVPQFGCIAASFSFRQWVDARSAVVALWDYRLQGRHDFVPELIPNVVVPSDMDELKDRLRDLFSSHVLSLMENGQGVKKVRMEIDDKSRQVASFSSKRGLKFEVFEKKKALEAERDLVVNRLDEFNNAMKSILRYLIGQDGYEFDVDDEDDEDVAVFSLEGAYDWRRIHYLILRECRRLEDGLPIYAYRRQILKKIHCEQIMVLIGETGSGKSTQLVQFLADSGVAASESIVCTQPRKIAAMTLTDRVREESSGCYEENTVSCTPTFSSTEEISSKVVYMTDNCLLQHYMKDRSLSGISCVIIDEAHERSLNTDLLLALLRKLLSRRIDLRLVIMSATADANQLSQYLFDCGILHVNGRNFPVEIVYSPSGTEENSVVGRIASYAGDVVKMAVEIHKTEKEGTILAFLTSQAEVEWACERFVAPSAIALPLHGKLSFEEQFMVFQNYPGRRKVIFATNIAETSLTIPGVKYVIDSGMVKESKYEPRTGMSILKVCQVSQSSARQRAGRAGRTEPGRCYRLYSKTDFDSMNLNQEPEIRRVHLGVALLRMLALGIDNIAAFEFVDAPVPEAIAMAIQNLVQLGAVVEKNGVLELTQEGHCLVKLGLEPKLGKLILGCFRHRMGKEGIVLAAVMANASSIFCRVGNFDDKMKADRLKVQFCNDNGDLFTLLSVYKEWASLPRDRRNKWCWENSLNAKSMRRCEDTVKELEICIERELTLVSPSYWVWNPNEGTKHDKYLKMVILASLAENVAMYTGYDQLGYEVALTSQQVQLHPSCSLLAFGQKPSWVVFGELLSIVDQYLVCVTAFDFEALYMLDPPPPFDASQMDERRLRVKKVVGCSSTVLKRFCGKSNRSLLSIVSRARSLCSDERIGIQVDVDQNEIRLYASPLDMEKVSALVNDALECEKKWMRNECLEKYLFHGRGQIPIALFGSGAQIKHLEVDQRFLTVDVHYYGDDVVDDRELLTFLEKKIDGCICSIYKFAANKQDCDEKEKWGRITFLTPESAMKATEIQKFDFKGSVLKVFPSLSTGGGIFKMPYFSSVTAKIRWPRKESSGRGCLKCPSGDIHSILGDITSLEIGTNYVHIQRDQLSNDSILISGLGDLSEAEVLDVLEFRTQRRDLNFFIFRKKYSVQCPSPTACEEELHKRIFARMSAKNPEPNCVQVQVFEPKEDNYFMRALIKFDGRLHLEAAKALQELNGEVLPGCLPWQKIKCEQLFQSSIICSASIYNTVKRQLNVLLARFERQKGGECCLEPTHNGAYRVKITAYATRPVAEMRRELEELLRGKPINHPGFTPRVVQHLMSRDGINLMRKIQQETETYILLDRHNLTVRICGTSEKIAKAEQELVQSLMDYHESKQLEIHLRGPEIRPDLMKEVVKRFGPELQGIKEKVHGVDLKLNTRYHVIQVHGSKEMRQEVQKMVNELAREKSALGEKPDEIELECPICLSEVDDGYSLEGCSHLFCKACLLEQFEASMRNFDAFPILCSHIDCGAPIVVADMRALLSQEKLDELISASLSAFVTSSDGKLRFCSTPDCPSIYRVAGPQESGEPFICGACHSETCTRCHLEYHPLITCERYKKFKENPDLSLKDWAKGKDVKECPICKSTIEKTDGCNHLQCRCGKHICWTCLDVFTQAEPCYAHLRTIHGGIGLVELGVPEHPVAQPVHRL.

The transit peptide at 1-33 directs the protein to the chloroplast; that stretch reads MRNSFPPSDGGRSTTDRRQQSFPSSSTNRYNSR. Positions 1-75 are disordered; it reads MRNSFPPSDG…DRAPSSGFSP (75 aa). Residues 20–60 show a composition bias toward polar residues; sequence QSFPSSSTNRYNSRSAQSSPPLNHCTTWNQQHSQYHNTNFP. The 165-residue stretch at 313–477 folds into the Helicase ATP-binding domain; that stretch reads LKKIHCEQIM…LFDCGILHVN (165 aa). 326–333 contributes to the ATP binding site; the sequence is GETGSGKS. The short motif at 424-427 is the DEAH box element; the sequence is DEAH. Positions 507-673 constitute a Helicase C-terminal domain; it reads DVVKMAVEIH…VALLRMLALG (167 aa). Residues 1557 to 1764 are TRIAD supradomain; the sequence is IELECPICLS…EPCYAHLRTI (208 aa). Residues Cys-1561, Cys-1564, Cys-1577, His-1579, Cys-1582, Cys-1585, Cys-1604, Cys-1609, Cys-1649, Cys-1654, Cys-1672, Cys-1675, Cys-1680, Cys-1683, His-1688, Cys-1693, Cys-1719, and Cys-1722 each contribute to the Zn(2+) site. The segment at 1561 to 1609 adopts an RING-type 1 zinc-finger fold; sequence CPICLSEVDDGYSLEGCSHLFCKACLLEQFEASMRNFDAFPILCSHIDC. The segment at 1628 to 1693 adopts an IBR-type zinc-finger fold; sequence DELISASLSA…HLEYHPLITC (66 aa). The RING-type 2; atypical zinc-finger motif lies at 1719 to 1747; the sequence is CPICKSTIEKTDGCNHLQCRCGKHICWTC. Cys-1732 is an active-site residue. Zn(2+) is bound by residues Cys-1737 and Cys-1739.

Belongs to the DEAD box helicase family. DEAH subfamily.

The protein localises to the plastid. It localises to the chloroplast. It carries out the reaction ATP + H2O = ADP + phosphate + H(+). In Arabidopsis thaliana (Mouse-ear cress), this protein is ATP-dependent RNA helicase DEAH11, chloroplastic.